We begin with the raw amino-acid sequence, 701 residues long: Elongation factor G (701 aa).

The tr-type G domain maps to 8–290 (SLYRNIGISA…AVVELLPAPT (283 aa)). GTP contacts are provided by residues 17–24 (AHIDAGKT), 88–92 (DTPGH), and 142–145 (NKMD).

It belongs to the TRAFAC class translation factor GTPase superfamily. Classic translation factor GTPase family. EF-G/EF-2 subfamily.

Its subcellular location is the cytoplasm. In terms of biological role, catalyzes the GTP-dependent ribosomal translocation step during translation elongation. During this step, the ribosome changes from the pre-translocational (PRE) to the post-translocational (POST) state as the newly formed A-site-bound peptidyl-tRNA and P-site-bound deacylated tRNA move to the P and E sites, respectively. Catalyzes the coordinated movement of the two tRNA molecules, the mRNA and conformational changes in the ribosome. This Neisseria meningitidis serogroup C (strain 053442) protein is Elongation factor G.